Consider the following 382-residue polypeptide: D-galactonate dehydratase (382 aa).

D183 lines the Mg(2+) pocket. H185 acts as the Proton donor in catalysis. Positions 209 and 235 each coordinate Mg(2+). Catalysis depends on H285, which acts as the Proton acceptor.

This sequence belongs to the mandelate racemase/muconate lactonizing enzyme family. GalD subfamily. Mg(2+) is required as a cofactor.

The enzyme catalyses D-galactonate = 2-dehydro-3-deoxy-D-galactonate + H2O. Its pathway is carbohydrate acid metabolism; D-galactonate degradation; D-glyceraldehyde 3-phosphate and pyruvate from D-galactonate: step 1/3. Functionally, catalyzes the dehydration of D-galactonate to 2-keto-3-deoxy-D-galactonate. This Pectobacterium atrosepticum (strain SCRI 1043 / ATCC BAA-672) (Erwinia carotovora subsp. atroseptica) protein is D-galactonate dehydratase.